Here is a 151-residue protein sequence, read N- to C-terminus: Caveolin-3 (151 aa).

Residues 1–83 (MMAEEHTDLE…RLLSTLLGVP (83 aa)) are Cytoplasmic-facing. Residue Lys38 forms a Glycyl lysine isopeptide (Lys-Gly) (interchain with G-Cter in SUMO3) linkage. The required for interaction with DAG1 stretch occupies residues 64–114 (TFTVSKYWCYRLLSTLLGVPLALLWGFLFACISFCHIWAVVPCIKSYLIEI). The segment at residues 84-104 (LALLWGFLFACISFCHIWAVV) is an intramembrane region (helical). Topologically, residues 105 to 151 (PCIKSYLIEIQCISHIYSLCIRTFCNPLFAALGQVCSNIKVMLRKEV) are cytoplasmic.

This sequence belongs to the caveolin family. Homooligomer. Interacts with DYSF. Interacts with DLG1 and KCNA5; forms a ternary complex. Interacts with DAG1 (via its C-terminal); the interaction prevents binding of DAG1 with DMD. Interacts with TRIM72. Interacts with MUSK; may regulate MUSK signaling. Interacts with POPDC1. Interacts with CAVIN1, CAVIN2 and CAVIN4. Post-translationally, sumoylation with SUMO3 by PIAS4 may reduce agonist-induced internalization and desensitization of adrenergic receptor ABRD2.

The protein resides in the golgi apparatus membrane. The protein localises to the cell membrane. It localises to the membrane. Its subcellular location is the caveola. It is found in the sarcolemma. Its function is as follows. May act as a scaffolding protein within caveolar membranes. Interacts directly with G-protein alpha subunits and can functionally regulate their activity. May also regulate voltage-gated potassium channels. Plays a role in the sarcolemma repair mechanism of both skeletal muscle and cardiomyocytes that permits rapid resealing of membranes disrupted by mechanical stress. Mediates the recruitment of CAVIN2 and CAVIN3 proteins to the caveolae. The polypeptide is Caveolin-3 (CAV3) (Bos taurus (Bovine)).